The chain runs to 91 residues: Beta-microseminoprotein (91 aa).

Intrachain disulfides connect C2/C54, C22/C46, C41/C75, C44/C53, and C68/C88.

As to expression, expressed in ciliated epithelium of nidamental gland and in secretory-like cells in accessory nidamental gland (at protein level). Expressed in ovary, nidamental gland and accessory nidamental gland.

The protein localises to the secreted. Acts as a pheromone. Triggers aggressive behaviors in males such as fin beating, lunging and grabbing. These behaviors form part of the competition for fertile females. The protein is Beta-microseminoprotein of Doryteuthis pealeii (Longfin inshore squid).